A 507-amino-acid chain; its full sequence is ATP synthase subunit alpha, chloroplastic (507 aa).

170–177 (GDRQTGKT) contacts ATP.

Belongs to the ATPase alpha/beta chains family. As to quaternary structure, F-type ATPases have 2 components, CF(1) - the catalytic core - and CF(0) - the membrane proton channel. CF(1) has five subunits: alpha(3), beta(3), gamma(1), delta(1), epsilon(1). CF(0) has four main subunits: a, b, b' and c.

The protein resides in the plastid. Its subcellular location is the chloroplast thylakoid membrane. It catalyses the reaction ATP + H2O + 4 H(+)(in) = ADP + phosphate + 5 H(+)(out). Produces ATP from ADP in the presence of a proton gradient across the membrane. The alpha chain is a regulatory subunit. The chain is ATP synthase subunit alpha, chloroplastic from Manihot esculenta (Cassava).